The following is a 151-amino-acid chain: Ribosome maturation factor RimP (151 aa).

It belongs to the RimP family.

It localises to the cytoplasm. In terms of biological role, required for maturation of 30S ribosomal subunits. In Saccharophagus degradans (strain 2-40 / ATCC 43961 / DSM 17024), this protein is Ribosome maturation factor RimP.